Consider the following 1203-residue polypeptide: Exonuclease/helicase subunit RexA (1203 aa).

The UvrD-like helicase ATP-binding domain occupies valine 4–arginine 472. Alanine 25–threonine 32 provides a ligand contact to ATP. Positions valine 503 to glycine 785 constitute a UvrD-like helicase C-terminal domain.

Belongs to the helicase family. AddA subfamily. Heterodimer of RexA (AddA) and RexB. Mg(2+) is required as a cofactor.

It carries out the reaction Couples ATP hydrolysis with the unwinding of duplex DNA by translocating in the 3'-5' direction.. It catalyses the reaction ATP + H2O = ADP + phosphate + H(+). In terms of biological role, the heterodimer acts both as an ATP-dependent DNA helicase and an ATP-dependent, dual-direction single-stranded exonuclease. Recognizes the L.lactis chi site (5'-GCGCGTG-3'), which stimulates homologous recombination. The RexA (AddA) nuclease domain is required for chi fragment generation; this subunit has 3'-&gt;5' exonuclease activity and probably also performs the helicase function. The chain is Exonuclease/helicase subunit RexA from Lactococcus lactis subsp. cremoris (strain MG1363).